We begin with the raw amino-acid sequence, 422 residues long: Enolase (422 aa).

Glutamine 162 contacts (2R)-2-phosphoglycerate. Glutamate 204 serves as the catalytic Proton donor. Residues aspartate 241, glutamate 285, and aspartate 312 each contribute to the Mg(2+) site. Lysine 337, arginine 366, serine 367, and lysine 388 together coordinate (2R)-2-phosphoglycerate. Lysine 337 serves as the catalytic Proton acceptor.

Belongs to the enolase family. The cofactor is Mg(2+).

Its subcellular location is the cytoplasm. The protein localises to the secreted. It localises to the cell surface. The catalysed reaction is (2R)-2-phosphoglycerate = phosphoenolpyruvate + H2O. It participates in carbohydrate degradation; glycolysis; pyruvate from D-glyceraldehyde 3-phosphate: step 4/5. Its function is as follows. Catalyzes the reversible conversion of 2-phosphoglycerate (2-PG) into phosphoenolpyruvate (PEP). It is essential for the degradation of carbohydrates via glycolysis. The chain is Enolase from Wolinella succinogenes (strain ATCC 29543 / DSM 1740 / CCUG 13145 / JCM 31913 / LMG 7466 / NCTC 11488 / FDC 602W) (Vibrio succinogenes).